The following is a 184-amino-acid chain: ATP synthase subunit b (184 aa).

A helical transmembrane segment spans residues 4–24 (LSVLFALVASPALAASGPFFS).

This sequence belongs to the ATPase B chain family. In terms of assembly, F-type ATPases have 2 components, F(1) - the catalytic core - and F(0) - the membrane proton channel. F(1) has five subunits: alpha(3), beta(3), gamma(1), delta(1), epsilon(1). F(0) has three main subunits: a(1), b(2) and c(10-14). The alpha and beta chains form an alternating ring which encloses part of the gamma chain. F(1) is attached to F(0) by a central stalk formed by the gamma and epsilon chains, while a peripheral stalk is formed by the delta and b chains.

It is found in the cell inner membrane. Functionally, f(1)F(0) ATP synthase produces ATP from ADP in the presence of a proton or sodium gradient. F-type ATPases consist of two structural domains, F(1) containing the extramembraneous catalytic core and F(0) containing the membrane proton channel, linked together by a central stalk and a peripheral stalk. During catalysis, ATP synthesis in the catalytic domain of F(1) is coupled via a rotary mechanism of the central stalk subunits to proton translocation. Component of the F(0) channel, it forms part of the peripheral stalk, linking F(1) to F(0). The sequence is that of ATP synthase subunit b from Paracoccus denitrificans (strain Pd 1222).